The following is a 429-amino-acid chain: GTPase Obg (429 aa).

In terms of domain architecture, Obg spans 1 to 158; the sequence is MFVDQVKIYV…RNVQLELKVL (158 aa). Positions 124-145 are disordered; that stretch reads RGNKRFATPANPAPELSENGEP. One can recognise an OBG-type G domain in the interval 159 to 329; the sequence is ADVGLVGFPS…LLLAIADKLE (171 aa). GTP-binding positions include 165-172, 190-194, 212-215, 282-285, and 310-312; these read GFPSVGKS, FTTIV, DLPG, NKMD, and SAV. The Mg(2+) site is built by Ser-172 and Thr-192. The OCT domain occupies 351–429; the sequence is KYVAEEPDFE…LLDYEFEFMD (79 aa).

This sequence belongs to the TRAFAC class OBG-HflX-like GTPase superfamily. OBG GTPase family. Monomer. Mg(2+) serves as cofactor.

It is found in the cytoplasm. Functionally, an essential GTPase which binds GTP, GDP and possibly (p)ppGpp with moderate affinity, with high nucleotide exchange rates and a fairly low GTP hydrolysis rate. Plays a role in control of the cell cycle, stress response, ribosome biogenesis and in those bacteria that undergo differentiation, in morphogenesis control. The sequence is that of GTPase Obg from Listeria monocytogenes serotype 4b (strain F2365).